A 391-amino-acid polypeptide reads, in one-letter code: Stearoyl-[acyl-carrier-protein] 9-desaturase 5, chloroplastic (391 aa).

Residues 1–20 (MAFAPSHTASPSYCGVAQGG) are disordered. The N-terminal 32 residues, 1 to 32 (MAFAPSHTASPSYCGVAQGGRRSNGMSPVVAM), are a transit peptide targeting the chloroplast. Fe cation contacts are provided by E133, E171, H174, E224, E257, and H260.

The protein belongs to the fatty acid desaturase type 2 family. Homodimer. Fe(2+) is required as a cofactor.

The protein localises to the plastid. It is found in the chloroplast. It carries out the reaction octadecanoyl-[ACP] + 2 reduced [2Fe-2S]-[ferredoxin] + O2 + 2 H(+) = (9Z)-octadecenoyl-[ACP] + 2 oxidized [2Fe-2S]-[ferredoxin] + 2 H2O. The protein operates within lipid metabolism; fatty acid metabolism. Its function is as follows. Converts stearoyl-ACP to oleoyl-ACP by introduction of a cis double bond between carbons 9 and 10 of the acyl chain. The polypeptide is Stearoyl-[acyl-carrier-protein] 9-desaturase 5, chloroplastic (Oryza sativa subsp. indica (Rice)).